Here is a 116-residue protein sequence, read N- to C-terminus: Large ribosomal subunit protein bL20 (116 aa).

This sequence belongs to the bacterial ribosomal protein bL20 family.

Functionally, binds directly to 23S ribosomal RNA and is necessary for the in vitro assembly process of the 50S ribosomal subunit. It is not involved in the protein synthesizing functions of that subunit. In Fusobacterium nucleatum subsp. nucleatum (strain ATCC 25586 / DSM 15643 / BCRC 10681 / CIP 101130 / JCM 8532 / KCTC 2640 / LMG 13131 / VPI 4355), this protein is Large ribosomal subunit protein bL20.